Reading from the N-terminus, the 447-residue chain is Phosphoglucosamine mutase (447 aa).

Serine 105 functions as the Phosphoserine intermediate in the catalytic mechanism. The Mg(2+) site is built by serine 105, aspartate 244, aspartate 246, and aspartate 248. Serine 105 bears the Phosphoserine mark.

This sequence belongs to the phosphohexose mutase family. It depends on Mg(2+) as a cofactor. Activated by phosphorylation.

The catalysed reaction is alpha-D-glucosamine 1-phosphate = D-glucosamine 6-phosphate. In terms of biological role, catalyzes the conversion of glucosamine-6-phosphate to glucosamine-1-phosphate. In Polynucleobacter asymbioticus (strain DSM 18221 / CIP 109841 / QLW-P1DMWA-1) (Polynucleobacter necessarius subsp. asymbioticus), this protein is Phosphoglucosamine mutase.